Consider the following 162-residue polypeptide: Larval cuticle protein F1 (162 aa).

A run of 4 repeats spans residues 27–30, 43–46, 59–62, and 75–78.

Component of the larval cuticle. The sequence is that of Larval cuticle protein F1 from Tenebrio molitor (Yellow mealworm beetle).